Consider the following 314-residue polypeptide: Methionyl-tRNA formyltransferase (314 aa).

Residue 110-113 (SLLP) coordinates (6S)-5,6,7,8-tetrahydrofolate.

This sequence belongs to the Fmt family.

It catalyses the reaction L-methionyl-tRNA(fMet) + (6R)-10-formyltetrahydrofolate = N-formyl-L-methionyl-tRNA(fMet) + (6S)-5,6,7,8-tetrahydrofolate + H(+). In terms of biological role, attaches a formyl group to the free amino group of methionyl-tRNA(fMet). The formyl group appears to play a dual role in the initiator identity of N-formylmethionyl-tRNA by promoting its recognition by IF2 and preventing the misappropriation of this tRNA by the elongation apparatus. This Lactobacillus gasseri (strain ATCC 33323 / DSM 20243 / BCRC 14619 / CIP 102991 / JCM 1131 / KCTC 3163 / NCIMB 11718 / NCTC 13722 / AM63) protein is Methionyl-tRNA formyltransferase.